We begin with the raw amino-acid sequence, 419 residues long: Imidazolonepropionase (419 aa).

Fe(3+) contacts are provided by histidine 84 and histidine 86. Residues histidine 84 and histidine 86 each coordinate Zn(2+). 4-imidazolone-5-propanoate is bound by residues arginine 93, tyrosine 156, and histidine 189. Tyrosine 156 is a binding site for N-formimidoyl-L-glutamate. Histidine 254 provides a ligand contact to Fe(3+). Histidine 254 is a Zn(2+) binding site. Position 257 (glutamine 257) interacts with 4-imidazolone-5-propanoate. Aspartate 329 lines the Fe(3+) pocket. Aspartate 329 lines the Zn(2+) pocket. Residues asparagine 331 and glycine 333 each coordinate N-formimidoyl-L-glutamate. Threonine 334 contributes to the 4-imidazolone-5-propanoate binding site.

Belongs to the metallo-dependent hydrolases superfamily. HutI family. In terms of assembly, monomer. Forms a tightly packed homodimer in the crystal, but this seems to be an artifact of crystallization. It depends on Zn(2+) as a cofactor. Fe(3+) serves as cofactor.

It is found in the cytoplasm. The catalysed reaction is 4-imidazolone-5-propanoate + H2O = N-formimidoyl-L-glutamate. It functions in the pathway amino-acid degradation; L-histidine degradation into L-glutamate; N-formimidoyl-L-glutamate from L-histidine: step 3/3. Functionally, catalyzes the hydrolytic cleavage of the carbon-nitrogen bond in imidazolone-5-propanoate to yield N-formimidoyl-L-glutamate. It is the third step in the universal histidine degradation pathway. This is Imidazolonepropionase from Agrobacterium fabrum (strain C58 / ATCC 33970) (Agrobacterium tumefaciens (strain C58)).